The primary structure comprises 506 residues: Protein MGF 505-4R (506 aa).

Belongs to the asfivirus MGF 505 family.

Functionally, plays a role in virus cell tropism, and may be required for efficient virus replication in macrophages. In Ornithodoros (relapsing fever ticks), this protein is Protein MGF 505-4R.